We begin with the raw amino-acid sequence, 1802 residues long: Bromodomain and WD repeat-containing protein 3 (1802 aa).

8 WD repeats span residues 170–209 (IKMH…IWAT), 213–251 (RLLA…VWCL), 255–297 (APVA…FWQW), 307–347 (RPVK…IYYL), 353–393 (EKIA…IWQY), 400–452 (SIVL…VWNS), 456–495 (QLLH…IWDL), and 502–542 (RNYF…LFGF). Phosphoserine occurs at positions 693 and 703. Residues 768–910 (KPSYTTQRND…PKQTRKKKGG (143 aa)) are disordered. The span at 785 to 795 (SLRRTQRKRQH) shows a compositional bias: basic residues. A compositionally biased stretch (polar residues) spans 796–817 (TYQTRSNIEHNSQASCQNSGVQ). Residues 818–829 (EDSDSSSEEDET) show a composition bias toward acidic residues. Residues 846–859 (SESSSSDSSSEYSD) show a composition bias toward low complexity. 2 positions are modified to phosphoserine: Ser885 and Ser886. Residues 889–898 (ENLKSLEERQ) show a composition bias toward basic and acidic residues. The segment covering 899–909 (KKPKQTRKKKG) has biased composition (basic residues). The region spanning 1138 to 1245 (WGAHSRDEEC…DVLLRFIGDQ (108 aa)) is the Bromo 1 domain. Disordered stretches follow at residues 1262-1292 (RNST…VKCR), 1326-1361 (RQPA…LSED), 1438-1500 (IQSQ…SPVS), and 1520-1725 (SSSS…RAKR). The segment covering 1266–1278 (DAEEDTEIVDLDS) has biased composition (acidic residues). The region spanning 1300–1430 (CNPDAWKKQC…ALFESHIKNI (131 aa)) is the Bromo 2 domain. Basic residues predominate over residues 1441–1453 (QKRRRPRYRKRLR). A compositionally biased stretch (low complexity) spans 1454–1468 (SSSSSLSSSGAPSPK). A compositionally biased stretch (polar residues) spans 1479–1499 (KNDQNTSVSHARTSSPFSSPV). The span at 1520–1533 (SSSSFGGYSRSGNS) shows a compositional bias: low complexity. Residues Ser1577 and Ser1579 each carry the phosphoserine modification. Residues 1587–1600 (GEDKEKKETKEKSH) are compositionally biased toward basic and acidic residues. Low complexity predominate over residues 1601–1626 (LSTSESGELGSSLSSESTCGSDSDSE). The span at 1627-1643 (STSRTDQDYVDGDHDYS) shows a compositional bias: basic and acidic residues. 2 stretches are compositionally biased toward basic residues: residues 1649–1666 (RPKR…RNWK) and 1684–1697 (RGGR…RGSR). Ser1763 is subject to Phosphoserine.

Found in most adult tissues. Down-regulated in a majority of the B-CLL cases examined.

Functionally, plays a role in the regulation of cell morphology and cytoskeletal organization. Required in the control of cell shape. This is Bromodomain and WD repeat-containing protein 3 (BRWD3) from Homo sapiens (Human).